The chain runs to 246 residues: Uridylate kinase (246 aa).

Residue K18–G21 coordinates ATP. G60 provides a ligand contact to UMP. 2 residues coordinate ATP: G61 and R65. UMP is bound by residues D80 and T141–T148. Residues T168, Y174, and D177 each contribute to the ATP site.

Belongs to the UMP kinase family. Homohexamer.

It is found in the cytoplasm. It catalyses the reaction UMP + ATP = UDP + ADP. It functions in the pathway pyrimidine metabolism; CTP biosynthesis via de novo pathway; UDP from UMP (UMPK route): step 1/1. Its activity is regulated as follows. Inhibited by UTP. Catalyzes the reversible phosphorylation of UMP to UDP. The chain is Uridylate kinase from Pseudomonas syringae pv. syringae (strain B728a).